The sequence spans 384 residues: Alanine racemase (384 aa).

Lysine 39 serves as the catalytic Proton acceptor; specific for D-alanine. Position 39 is an N6-(pyridoxal phosphate)lysine (lysine 39). Arginine 136 is a substrate binding site. The active-site Proton acceptor; specific for L-alanine is tyrosine 265. Methionine 312 is a binding site for substrate.

It belongs to the alanine racemase family. It depends on pyridoxal 5'-phosphate as a cofactor.

It catalyses the reaction L-alanine = D-alanine. It participates in amino-acid biosynthesis; D-alanine biosynthesis; D-alanine from L-alanine: step 1/1. Its function is as follows. Catalyzes the interconversion of L-alanine and D-alanine. May also act on other amino acids. This Geobacillus kaustophilus (strain HTA426) protein is Alanine racemase (alr).